A 102-amino-acid chain; its full sequence is Putative pterin-4-alpha-carbinolamine dehydratase (102 aa).

Belongs to the pterin-4-alpha-carbinolamine dehydratase family.

The enzyme catalyses (4aS,6R)-4a-hydroxy-L-erythro-5,6,7,8-tetrahydrobiopterin = (6R)-L-erythro-6,7-dihydrobiopterin + H2O. The sequence is that of Putative pterin-4-alpha-carbinolamine dehydratase from Burkholderia lata (strain ATCC 17760 / DSM 23089 / LMG 22485 / NCIMB 9086 / R18194 / 383).